We begin with the raw amino-acid sequence, 583 residues long: Alpha-1,3-arabinosyltransferase XAT2 (583 aa).

At 1–21 the chain is on the cytoplasmic side; it reads MKPVERAKLVRSLRQESRRLR. The chain crosses the membrane as a helical; Signal-anchor for type II membrane protein span at residues 22–42; that stretch reads LLVLVIGFFLVTLTFVVISKP. Residues 43–583 are Lumenal-facing; that stretch reads DALLFNLNGR…LLEVLDQLNQ (541 aa). The segment at 73-178 is disordered; the sequence is RRSADTFPAA…NGKQEDGKPN (106 aa). Basic and acidic residues-rich tracts occupy residues 102 to 121 and 135 to 146; these read TSEE…KNEE and EDNKNGEEEGHT. Over residues 149–160 the composition is skewed to polar residues; the sequence is SKVTLPTVSNYT. The N-linked (GlcNAc...) asparagine glycan is linked to asparagine 158. Positions 162-178 are enriched in basic and acidic residues; it reads RDAEDTDNGKQEDGKPN. N-linked (GlcNAc...) asparagine glycans are attached at residues asparagine 229, asparagine 382, asparagine 450, and asparagine 485.

The protein belongs to the glycosyltransferase 61 family.

It localises to the golgi apparatus membrane. Its pathway is glycan metabolism. Glycosyltransferase involved in the arabinosylation of xylan, the major hemicellulose (non-cellulosic component) of primary and secondary walls of angiosperms. Possesses alpha-1,3-arabinosyltransferase activity, transferring an arabinofuranose residue to the xylan backbone. The polypeptide is Alpha-1,3-arabinosyltransferase XAT2 (Oryza sativa subsp. japonica (Rice)).